Reading from the N-terminus, the 662-residue chain is Methyl-accepting chemotaxis protein McpB (662 aa).

The Cytoplasmic segment spans residues 1 to 16; that stretch reads MKTFINWLKKPSISKK. The chain crosses the membrane as a helical span at residues 17 to 37; the sequence is LIVSFIAILIIPILILEFSSY. At 38–282 the chain is on the extracellular side; it reads RSASGKLDQE…IKDASKSVLT (245 aa). The Cache domain maps to 153–229; it reads VTDPYVAASD…KAGEKLSGDW (77 aa). Residues 283 to 303 form a helical membrane-spanning segment; sequence TGMIVLIASIVAGGILILFIV. Positions 304-356 constitute an HAMP domain; the sequence is RSITKPLKRLVQSSKTISRGDLTETIEIHSKDELGELGESFNEMGQSLRSLIS. Topologically, residues 304–662 are cytoplasmic; it reads RSITKPLKRL…RDLTKQFKIE (359 aa). Glutamate methyl ester (Gln) occurs at positions 371 and 595. The region spanning 375–611 is the Methyl-accepting transducer domain; that stretch reads SAGQTSKATE…HVSAAVSGIA (237 aa). Glutamate methyl ester (Glu) occurs at positions 630 and 637.

This sequence belongs to the methyl-accepting chemotaxis (MCP) protein family. As to quaternary structure, interacts with FloT. In terms of processing, some glutamine residues are deamidated to glutamate by CheD and subsequently methylated. Post-translationally, the demethylation is selective. Gln-371 is demethylated only upon asparagine addition whereas Glu-637 is demethylated only upon asparagine removal. Glu-630 appears indiscriminate and is demethylated upon both addition and removal of asparagine.

The protein resides in the cell membrane. Its subcellular location is the membrane raft. Functionally, chemotactic-signal transducers respond to changes in the concentration of attractants and repellents in the environment, transduce a signal from the outside to the inside of the cell, and facilitate sensory adaptation through the variation of the level of methylation. All amino acids serve as attractants in B.subtilis, they appear to cause an increase in the turnover methyl groups, leading to methylation of an unidentified acceptor, while repellents have been shown to cause a decrease in methyl group turnover. The methyl groups are added by a methyltransferase and removed by a methylesterase. McpB is required for taxis towards asparagine, aspartate, glutamine, and histidine. The chain is Methyl-accepting chemotaxis protein McpB (mcpB) from Bacillus subtilis (strain 168).